Consider the following 567-residue polypeptide: Ran-binding protein 3 (567 aa).

The span at 1 to 10 (MADLANEEKP) shows a compositional bias: basic and acidic residues. Disordered regions lie at residues 1-263 (MADL…FVFG), 332-373 (LSPP…AESA), and 515-567 (VEQE…TGST). Residue alanine 2 is modified to N-acetylalanine. N6-acetyllysine occurs at positions 9 and 21. Over residues 39–49 (EEPRGEAEAPH) the composition is skewed to basic and acidic residues. Phosphothreonine is present on threonine 75. The segment covering 75–89 (TPPPPAPEAQLPPFP) has biased composition (pro residues). Residues serine 100, serine 101, and serine 108 each carry the phosphoserine modification. The Nuclear localization signal motif lies at 117–125 (PPVKRERTS). Phosphothreonine is present on threonine 124. Composition is skewed to polar residues over residues 125–134 (SSLTQFPPSQ) and 184–197 (ALSQ…TNGV). Serine 126 carries the post-translational modification Phosphoserine. Serine 219, serine 333, serine 353, serine 355, and serine 372 each carry phosphoserine. Over residues 347 to 362 (ENAAAESGSESSSQEA) the composition is skewed to low complexity. Residues 378–518 (KATARKCLLE…LALRSRVEQE (141 aa)) form the RanBD1 domain. Residues 534-544 (NEEDDSDDDDV) are compositionally biased toward acidic residues. Position 539 is a phosphoserine (serine 539). Low complexity predominate over residues 549–567 (GATAAGAGDEGDGQTTGST).

As to quaternary structure, interacts with CHC1 in a Ran-stimulated manner. Interacts with XPO1. Interacts (via its C-terminal R domain) with SMAD2 (dephosphorylated form via its MH1 and MH2 domains); the interaction results in the nuclear export of SMAD2 and termination of the TGF-beta signaling. Interacts (via its C-terminal R domain) with SMAD3 (dephosphorylated form via its MH1 domain); the interaction results in the nuclear export of SMAD3 and termination of the TGF-beta signaling. In terms of processing, phosphorylation at Ser-126 promotes its import into the nucleus. As to expression, widely expressed with high levels in testis and heart.

Its subcellular location is the cytoplasm. It is found in the nucleus. Acts as a cofactor for XPO1/CRM1-mediated nuclear export, perhaps as export complex scaffolding protein. Bound to XPO1/CRM1, stabilizes the XPO1/CRM1-cargo interaction. In the absence of Ran-bound GTP prevents binding of XPO1/CRM1 to the nuclear pore complex. Binds to CHC1/RCC1 and increases the guanine nucleotide exchange activity of CHC1/RCC1. Recruits XPO1/CRM1 to CHC1/RCC1 in a Ran-dependent manner. Negative regulator of TGF-beta signaling through interaction with the R-SMAD proteins, SMAD2 and SMAD3, and mediating their nuclear export. This chain is Ran-binding protein 3 (RANBP3), found in Homo sapiens (Human).